The primary structure comprises 190 residues: Large ribosomal subunit protein uL6 (190 aa).

It belongs to the universal ribosomal protein uL6 family.

The chain is Large ribosomal subunit protein uL6 (RpL9) from Drosophila melanogaster (Fruit fly).